The chain runs to 252 residues: Small ribosomal subunit protein uS3 (252 aa).

The region spanning 39–111 is the KH type-2 domain; that stretch reads IRKLINNFAK…EVNLNVLEVK (73 aa). The segment at 222 to 252 is disordered; it reads KPFASQSSNTPNRRPRNFKGGNNNHVNAKKN. Residues 241–252 are compositionally biased toward polar residues; it reads GGNNNHVNAKKN.

This sequence belongs to the universal ribosomal protein uS3 family. As to quaternary structure, part of the 30S ribosomal subunit. Forms a tight complex with proteins S10 and S14.

Binds the lower part of the 30S subunit head. Binds mRNA in the 70S ribosome, positioning it for translation. This Phytoplasma sp. (strain STRAWB2) protein is Small ribosomal subunit protein uS3.